Here is a 197-residue protein sequence, read N- to C-terminus: Adrenodoxin-like protein 2, mitochondrial (197 aa).

The transit peptide at 1–74 (MVFHRLSRLG…TSFSTTSEKG (74 aa)) directs the protein to the mitochondrion. The region spanning 81–184 (INVTFVDKDG…GVRLAIPSAT (104 aa)) is the 2Fe-2S ferredoxin-type domain. Residues C118, C124, C127, and C165 each coordinate [2Fe-2S] cluster.

Belongs to the adrenodoxin/putidaredoxin family. It depends on [2Fe-2S] cluster as a cofactor.

It is found in the mitochondrion. Associates with the adrenodoxin reductase MFDR to form an efficient low potential electron transfer chain that is able to reduce cytochrome C. The chain is Adrenodoxin-like protein 2, mitochondrial from Arabidopsis thaliana (Mouse-ear cress).